We begin with the raw amino-acid sequence, 174 residues long: Urease accessory protein UreE (174 aa).

Residues 146-174 form a disordered region; it reads NGAYATGGHAHDHDGEPEHVHGPGCQHAH. The span at 154–166 shows a compositional bias: basic and acidic residues; the sequence is HAHDHDGEPEHVH.

This sequence belongs to the UreE family.

The protein resides in the cytoplasm. Its function is as follows. Involved in urease metallocenter assembly. Binds nickel. Probably functions as a nickel donor during metallocenter assembly. This is Urease accessory protein UreE from Albidiferax ferrireducens (strain ATCC BAA-621 / DSM 15236 / T118) (Rhodoferax ferrireducens).